Reading from the N-terminus, the 130-residue chain is 3-aminoacrylate deaminase RutC (130 aa).

It belongs to the RutC family.

It carries out the reaction (Z)-3-aminoacrylate + H2O + H(+) = 3-oxopropanoate + NH4(+). Involved in pyrimidine catabolism. Catalyzes the deamination of 3-aminoacrylate to malonic semialdehyde, a reaction that can also occur spontaneously. RutC may facilitate the reaction and modulate the metabolic fitness, rather than catalyzing essential functions. The protein is 3-aminoacrylate deaminase RutC of Methylorubrum extorquens (strain CM4 / NCIMB 13688) (Methylobacterium extorquens).